Here is a 1409-residue protein sequence, read N- to C-terminus: Tensin-2 (1409 aa).

The segment at 1–35 (MKSSGPVERLLRALGRRDSSRAASRPRKAEPHSFR) is disordered. Positions 9 to 20 (RLLRALGRRDSS) are enriched in basic and acidic residues. A Phorbol-ester/DAG-type zinc finger spans residues 31–79 (PHSFREKVFRKKPPVCAVCKVTIDGTGVSCRVCKVATHRKCEAKVTSAC). Threonine 91 is modified (phosphothreonine). A phosphoserine mark is found at serine 118 and serine 120. The Phosphatase tensin-type domain occupies 122-294 (DPLMERRWDL…SYFSGLLSGS (173 aa)). Catalysis depends on cysteine 231, which acts as the Phosphocysteine intermediate. Residues 299–425 (SSPLFLHYVL…ASVEFVFSSS (127 aa)) form the C2 tensin-type domain. Serine 455 carries the post-translational modification Phosphoserine. Position 456 is a phosphotyrosine (tyrosine 456). Residues 462-536 (HHEDSVDGSL…SPGRPPPTAA (75 aa)) are disordered. Serine 466 carries the post-translational modification Phosphoserine. Phosphothreonine is present on threonine 474. Serine 481 carries the phosphoserine modification. Tyrosine 483 carries the post-translational modification Phosphotyrosine. A compositionally biased stretch (pro residues) spans 491–506 (RQTPPAPSPEPPPPPM). Arginine 555 carries the post-translational modification Omega-N-methylarginine. 3 disordered regions span residues 562 to 582 (AILD…GVYP), 812 to 1098 (PGEG…SSPA), and 1111 to 1130 (LSDN…QSNV). 6 positions are modified to phosphoserine: serine 820, serine 825, serine 830, serine 832, serine 835, and serine 845. 2 stretches are compositionally biased toward polar residues: residues 900–918 (SASS…SSPV) and 930–940 (RSPTSAPTQRL). Threonine 910 is modified (phosphothreonine). Residues serine 931, serine 941, and serine 972 each carry the phosphoserine modification. The segment covering 968–982 (PLAPSPVSPTFPPSS) has biased composition (pro residues). Threonine 977 bears the Phosphothreonine mark. Phosphoserine is present on residues serine 991 and serine 1003. Pro residues predominate over residues 1046 to 1056 (PEPPQSSPTPA). In terms of domain architecture, SH2 spans 1140-1247 (WYKPHLSRDQ…SLPCCLRIPS (108 aa)). Threonine 1182 is modified (phosphothreonine). The residue at position 1247 (serine 1247) is a Phosphoserine. The PTB domain maps to 1275-1408 (ACSVLYLTSV…FITKVLLGQR (134 aa)).

Belongs to the PTEN phosphatase protein family. Interacts with AXL. Interacts with SYK; leading to its phosphorylation. Interacts with SQSTM1 (via PB1 domain); the interaction leads to sequestration of TNS2 in cytoplasmic aggregates with SQSTM1 and promotes TNS2 ubiquitination and proteasomal degradation. Post-translationally, ubiquitinated following sequestration in cytoplasmic aggregates with SQSTM1, leading to proteasomal degradation. In terms of tissue distribution, detected in heart, kidney, brain, thymus, spleen, liver, placenta, lung, skeletal muscle and small intestine.

The protein localises to the cell junction. Its subcellular location is the focal adhesion. The protein resides in the cell membrane. It localises to the cytoplasm. The enzyme catalyses O-phospho-L-tyrosyl-[protein] + H2O = L-tyrosyl-[protein] + phosphate. Functionally, tyrosine-protein phosphatase which regulates cell motility, proliferation and muscle-response to insulin. Phosphatase activity is mediated by binding to phosphatidylinositol-3,4,5-triphosphate (PtdIns(3,4,5)P3) via the SH2 domain. In muscles and under catabolic conditions, dephosphorylates IRS1 leading to its degradation and muscle atrophy. Negatively regulates PI3K-AKT pathway activation. Dephosphorylates nephrin NPHS1 in podocytes which regulates activity of the mTORC1 complex. Under normal glucose conditions, NPHS1 outcompetes IRS1 for binding to phosphatidylinositol 3-kinase (PI3K) which balances mTORC1 activity but high glucose conditions lead to up-regulation of TNS2, increased NPHS1 dephosphorylation and activation of mTORC1, contributing to podocyte hypertrophy and proteinuria. Required for correct podocyte morphology, podocyte-glomerular basement membrane interaction and integrity of the glomerular filtration barrier. Enhances RHOA activation in the presence of DLC1. Plays a role in promoting DLC1-dependent remodeling of the extracellular matrix. This Homo sapiens (Human) protein is Tensin-2 (TNS2).